Consider the following 305-residue polypeptide: Nucleotide-binding protein Mpe_A3336 (305 aa).

22–29 contributes to the ATP binding site; the sequence is GISGSGKS. 74–77 contributes to the GTP binding site; sequence DVRS.

It belongs to the RapZ-like family.

In terms of biological role, displays ATPase and GTPase activities. This Methylibium petroleiphilum (strain ATCC BAA-1232 / LMG 22953 / PM1) protein is Nucleotide-binding protein Mpe_A3336.